The sequence spans 102 residues: NADH-quinone oxidoreductase subunit K (102 aa).

Transmembrane regions (helical) follow at residues 5–25 (ITHYLTVSALMFTIGIAGIFL), 31–51 (IIILMSIELILLSVNINFVAF), and 66–86 (FVLTVAAAEAAIGLAILVVFF).

The protein belongs to the complex I subunit 4L family. As to quaternary structure, NDH-1 is composed of 14 different subunits. Subunits NuoA, H, J, K, L, M, N constitute the membrane sector of the complex.

The protein localises to the cell inner membrane. The enzyme catalyses a quinone + NADH + 5 H(+)(in) = a quinol + NAD(+) + 4 H(+)(out). Functionally, NDH-1 shuttles electrons from NADH, via FMN and iron-sulfur (Fe-S) centers, to quinones in the respiratory chain. The immediate electron acceptor for the enzyme in this species is believed to be ubiquinone. Couples the redox reaction to proton translocation (for every two electrons transferred, four hydrogen ions are translocated across the cytoplasmic membrane), and thus conserves the redox energy in a proton gradient. The chain is NADH-quinone oxidoreductase subunit K from Bartonella tribocorum (strain CIP 105476 / IBS 506).